The primary structure comprises 150 residues: Large ribosomal subunit protein bL9 (150 aa).

Belongs to the bacterial ribosomal protein bL9 family.

Binds to the 23S rRNA. The protein is Large ribosomal subunit protein bL9 of Polynucleobacter necessarius subsp. necessarius (strain STIR1).